The sequence spans 855 residues: Sucrose synthase 5 (855 aa).

Positions 279 to 758 are GT-B glycosyltransferase; that stretch reads SIFNIVIFSI…GLQRICECYT (480 aa).

Belongs to the glycosyltransferase 1 family. Plant sucrose synthase subfamily. In terms of tissue distribution, predominantly expressed in roots, flowers and immature seeds.

The protein localises to the cytoplasm. The protein resides in the membrane. The catalysed reaction is an NDP-alpha-D-glucose + D-fructose = a ribonucleoside 5'-diphosphate + sucrose + H(+). Functionally, sucrose-cleaving enzyme that provides UDP-glucose and fructose for various metabolic pathways. This is Sucrose synthase 5 (SUS5) from Oryza sativa subsp. japonica (Rice).